An 85-amino-acid chain; its full sequence is RNA-binding protein Hfq (85 aa).

The 60-residue stretch at Asp-9–Val-68 folds into the Sm domain. The segment at Arg-66–Glu-85 is disordered. Residues His-72–Glu-85 are compositionally biased toward basic and acidic residues.

The protein belongs to the Hfq family. As to quaternary structure, homohexamer.

Its function is as follows. RNA chaperone that binds small regulatory RNA (sRNAs) and mRNAs to facilitate mRNA translational regulation in response to envelope stress, environmental stress and changes in metabolite concentrations. Also binds with high specificity to tRNAs. This Photobacterium profundum (strain SS9) protein is RNA-binding protein Hfq.